The sequence spans 151 residues: Protein archease-like (151 aa).

Ca(2+) contacts are provided by D20, D150, and I151.

The protein belongs to the archease family.

Functionally, component of the tRNA-splicing ligase complex required to facilitate the enzymatic turnover of catalytic subunit RtcB. The chain is Protein archease-like from Dictyostelium discoideum (Social amoeba).